Consider the following 368-residue polypeptide: Quinolinate synthase (368 aa).

Positions 46 and 63 each coordinate iminosuccinate. Cysteine 110 lines the [4Fe-4S] cluster pocket. Residues 141-143 and serine 162 contribute to the iminosuccinate site; that span reads YVN. Residue cysteine 230 coordinates [4Fe-4S] cluster. Iminosuccinate is bound by residues 256-258 and threonine 273; that span reads HPE. Cysteine 320 is a binding site for [4Fe-4S] cluster.

The protein belongs to the quinolinate synthase family. Type 3 subfamily. [4Fe-4S] cluster is required as a cofactor.

It localises to the cytoplasm. The catalysed reaction is iminosuccinate + dihydroxyacetone phosphate = quinolinate + phosphate + 2 H2O + H(+). The protein operates within cofactor biosynthesis; NAD(+) biosynthesis; quinolinate from iminoaspartate: step 1/1. Functionally, catalyzes the condensation of iminoaspartate with dihydroxyacetone phosphate to form quinolinate. The chain is Quinolinate synthase from Bacillus cytotoxicus (strain DSM 22905 / CIP 110041 / 391-98 / NVH 391-98).